We begin with the raw amino-acid sequence, 719 residues long: Pesticidal crystal protein Cry1Ic (719 aa).

The protein belongs to the delta endotoxin family.

Functionally, promotes colloidosmotic lysis by binding to the midgut epithelial cells of insects. This is Pesticidal crystal protein Cry1Ic (cry1Ic) from Bacillus thuringiensis.